Reading from the N-terminus, the 418-residue chain is MNIIDELTWRGAINQQTDAEGLKKLTSEKKISLYCGVDPTGDSMHIGHLIPFMMMKRFELAGHHPYILIGGATGSIGDPSGRKTERQLQTMDKVQHNVKALSRQMQRLFGGDSNVTMVNNYDWLSKISLLDFLRDYGKLVNINTMLAKDIVASRLDTGISFTEFTYQILQSVDFLTLHNDHNIQLQIGGADQWGNITAGIDLIHKIKGADEAVYGLTIPLMLKADGTKFGKTAGGAIWLDADKTSPYEFYQFWLNQDDRDVIRYLKFFTFLGQDEINQLAAAVEDEPEKRLAQRRLAEEVTRFVHGEEALESAQHISEILFSGDIQRLTLTEVQEAFEKVPNVSINSEPTNIVELLTETAIEPSRRQAREDITNGAITINGERCTDTDAQLNPKTNFSGKFMVIRRGKKNYFLAKVKD.

Tyrosine 34 serves as a coordination point for L-tyrosine. The short motif at 39–48 (PTGDSMHIGH) is the 'HIGH' region element. The L-tyrosine site is built by tyrosine 166 and glutamine 170. The 'KMSKS' region signature appears at 228 to 232 (KFGKT). Lysine 231 contributes to the ATP binding site. In terms of domain architecture, S4 RNA-binding spans 350 to 417 (TNIVELLTET…KKNYFLAKVK (68 aa)).

This sequence belongs to the class-I aminoacyl-tRNA synthetase family. TyrS type 1 subfamily. Homodimer.

Its subcellular location is the cytoplasm. It carries out the reaction tRNA(Tyr) + L-tyrosine + ATP = L-tyrosyl-tRNA(Tyr) + AMP + diphosphate + H(+). Functionally, catalyzes the attachment of tyrosine to tRNA(Tyr) in a two-step reaction: tyrosine is first activated by ATP to form Tyr-AMP and then transferred to the acceptor end of tRNA(Tyr). The polypeptide is Tyrosine--tRNA ligase (Levilactobacillus brevis (Lactobacillus brevis)).